A 487-amino-acid polypeptide reads, in one-letter code: GTPase Der (487 aa).

In terms of domain architecture, EngA-type G 1 spans 2–166 (LKIAILGRPN…RIKLVANLPE (165 aa)). GTP is bound by residues 8–15 (GRPNVGKS), 55–59 (DTGGV), and 118–121 (NKAD). Residues 165–194 (PEPREEEEEGLEELSVDEHEESEAALPSNT) are disordered. Positions 168–187 (REEEEEGLEELSVDEHEESE) are enriched in acidic residues. The region spanning 225–398 (LKIALIGRPN…AIDELHHVVS (174 aa)) is the EngA-type G 2 domain. Residues 231–238 (GRPNVGKS), 278–282 (DTAGL), and 343–346 (NKWD) contribute to the GTP site. The 85-residue stretch at 399 to 483 (NKVPTPIVNK…PFDLEFKEKP (85 aa)) folds into the KH-like domain.

Belongs to the TRAFAC class TrmE-Era-EngA-EngB-Septin-like GTPase superfamily. EngA (Der) GTPase family. Associates with the 50S ribosomal subunit.

Functionally, GTPase that plays an essential role in the late steps of ribosome biogenesis. In Chlamydia pneumoniae (Chlamydophila pneumoniae), this protein is GTPase Der.